The chain runs to 214 residues: MTITEEDLIEPLRKVVEYSPPRRFLETVDMIVNVKGVDLSDPSQRIDKEVVLPHGRGKPVNVCVIAEGEMAREAEEAGATVINREKLEELAENVREAKKIARRHEFFYAQVDLMPDVGRVLGPVLGPRGKMAKPVPPNADIRALIERAHRTARVRMRDQPVIHTVIGARNMEPEQLAENAMAVLREITSELEKSWAQIDSVYVKTTMGPAERVY.

Belongs to the universal ribosomal protein uL1 family. As to quaternary structure, part of the 50S ribosomal subunit.

Its function is as follows. Binds directly to 23S rRNA. Probably involved in E site tRNA release. Functionally, protein L1 is also a translational repressor protein, it controls the translation of its operon by binding to its mRNA. The sequence is that of Large ribosomal subunit protein uL1 from Methanopyrus kandleri (strain AV19 / DSM 6324 / JCM 9639 / NBRC 100938).